The chain runs to 362 residues: Glutaminase-asparaginase (362 aa).

The signal sequence occupies residues 1 to 25 (MKPLLHAFAPGVMALMLLLPQAAQA). Residues 35 to 362 (SNVVILATGG…KELQRIFWEY (328 aa)) form the Asparaginase/glutaminase domain. The active-site Acyl-ester intermediate is T45. Substrate-binding positions include S92 and 125–126 (TD).

Belongs to the asparaginase 1 family. In terms of assembly, homotetramer.

It localises to the periplasm. The catalysed reaction is L-glutamine + H2O = L-glutamate + NH4(+). The enzyme catalyses L-asparagine + H2O = L-aspartate + NH4(+). The sequence is that of Glutaminase-asparaginase (ansB) from Pseudomonas aeruginosa (strain ATCC 15692 / DSM 22644 / CIP 104116 / JCM 14847 / LMG 12228 / 1C / PRS 101 / PAO1).